Reading from the N-terminus, the 61-residue chain is MAKTALITKAARKPKFKVRGYTRCQRCGRPHAVFRKFGLCRICVREMAHAGELPGVTKSSW.

Zn(2+) is bound by residues cysteine 24, cysteine 27, cysteine 40, and cysteine 43.

It belongs to the universal ribosomal protein uS14 family. Zinc-binding uS14 subfamily. In terms of assembly, part of the 30S ribosomal subunit. Contacts proteins S3 and S10. Zn(2+) is required as a cofactor.

Its function is as follows. Binds 16S rRNA, required for the assembly of 30S particles and may also be responsible for determining the conformation of the 16S rRNA at the A site. This chain is Small ribosomal subunit protein uS14B, found in Kineococcus radiotolerans (strain ATCC BAA-149 / DSM 14245 / SRS30216).